Consider the following 359-residue polypeptide: Photosystem II protein D1 1 (359 aa).

3 helical membrane passes run 29–46, 118–133, and 142–156; these read YVGW…AATT, HFLI…EWEL, and WICI…AASA. Histidine 118 serves as a coordination point for chlorophyll a. Tyrosine 126 serves as a coordination point for pheophytin a. The [CaMn4O5] cluster site is built by aspartate 170 and glutamate 189. Residues 197 to 218 traverse the membrane as a helical segment; sequence FHMLGVAGVFGGSLFSAMHGSL. Histidine 198 contacts chlorophyll a. Residues histidine 215 and 264–265 each bind a quinone; that span reads SF. Histidine 215 is a Fe cation binding site. A Fe cation-binding site is contributed by histidine 272. Residues 274 to 288 form a helical membrane-spanning segment; the sequence is FLAAWPVVGIWFTAL. The [CaMn4O5] cluster site is built by histidine 332, glutamate 333, aspartate 342, and alanine 344. A propeptide spanning residues 345-359 is cleaved from the precursor; it reads AAESAPVALQAPAIG.

This sequence belongs to the reaction center PufL/M/PsbA/D family. In terms of assembly, PSII is composed of 1 copy each of membrane proteins PsbA, PsbB, PsbC, PsbD, PsbE, PsbF, PsbH, PsbI, PsbJ, PsbK, PsbL, PsbM, PsbT, PsbX, PsbY, PsbZ, Psb30/Ycf12, peripheral proteins PsbO, CyanoQ (PsbQ), PsbU, PsbV and a large number of cofactors. It forms dimeric complexes. Requires The D1/D2 heterodimer binds P680, chlorophylls that are the primary electron donor of PSII, and subsequent electron acceptors. It shares a non-heme iron and each subunit binds pheophytin, quinone, additional chlorophylls, carotenoids and lipids. D1 provides most of the ligands for the Mn4-Ca-O5 cluster of the oxygen-evolving complex (OEC). There is also a Cl(-1) ion associated with D1 and D2, which is required for oxygen evolution. The PSII complex binds additional chlorophylls, carotenoids and specific lipids. as cofactor. In terms of processing, tyr-161 forms a radical intermediate that is referred to as redox-active TyrZ, YZ or Y-Z. C-terminally processed by CtpA; processing is essential to allow assembly of the oxygen-evolving complex and thus photosynthetic growth.

Its subcellular location is the cellular thylakoid membrane. The catalysed reaction is 2 a plastoquinone + 4 hnu + 2 H2O = 2 a plastoquinol + O2. Photosystem II (PSII) is a light-driven water:plastoquinone oxidoreductase that uses light energy to abstract electrons from H(2)O, generating O(2) and a proton gradient subsequently used for ATP formation. It consists of a core antenna complex that captures photons, and an electron transfer chain that converts photonic excitation into a charge separation. The D1/D2 (PsbA/PsbD) reaction center heterodimer binds P680, the primary electron donor of PSII as well as several subsequent electron acceptors. The sequence is that of Photosystem II protein D1 1 from Synechococcus sp. (strain RCC307).